The chain runs to 291 residues: Elongation factor Ts, mitochondrial (291 aa).

The protein belongs to the EF-Ts family.

The protein localises to the mitochondrion. In terms of biological role, associates with the EF-Tu.GDP complex and induces the exchange of GDP to GTP. It remains bound to the aminoacyl-tRNA.EF-Tu.GTP complex up to the GTP hydrolysis stage on the ribosome. In Nematostella vectensis (Starlet sea anemone), this protein is Elongation factor Ts, mitochondrial.